The chain runs to 424 residues: SNF1-related protein kinase regulatory subunit gamma-1 (424 aa).

A2 bears the N-acetylalanine mark. The residue at position 44 (S44) is a Phosphoserine. 4 consecutive CBS domains span residues 63 to 131 (LSSD…EPPS), 185 to 244 (TFRW…CAGL), 263 to 324 (MSKD…YHDY), and 350 to 408 (IMSG…SGYF).

The protein belongs to the 5'-AMP-activated protein kinase gamma subunit family. In terms of assembly, subunit of a probable heterotrimeric complex consisting of an alpha catalytic (KIN10 or KIN11) subunit, and a beta (KINB) and a gamma (KING or SNF4) non-catalytic regulatory subunits. Interacts with HXK1 in mitochondrion. Sumoylated by SIZ1. In terms of tissue distribution, expressed in vegetative organs and, to lower extent, in reproductive organs.

The protein resides in the mitochondrion. Its function is as follows. Regulatory subunit of the probable trimeric SNF1-related protein kinase (SnRK) complex, which may play a role in a signal transduction cascade regulating gene expression and carbohydrate metabolism in higher plants. The SnRK complex may also be involved in the regulation of fatty acid synthesis by phosphorylation of acetyl-CoA carboxylase and in assimilation of nitrogen by phosphorylating nitrate reductase. This chain is SNF1-related protein kinase regulatory subunit gamma-1 (KING1), found in Arabidopsis thaliana (Mouse-ear cress).